The chain runs to 90 residues: MIILHLIHRSLNMLINTSNNLLITTIHLLSSIGAINWGLVGLFNFNLVTLLFGSFPIIVTIFYIIIGFCGVYSFLYLGKIFCKPGIKNVK.

Helical transmembrane passes span 23 to 43 (ITTI…VGLF) and 48 to 68 (VTLL…IIGF).

The protein localises to the cell membrane. This is an uncharacterized protein from Rickettsia prowazekii (strain Madrid E).